Reading from the N-terminus, the 536-residue chain is Methyl-accepting chemotaxis aspartate transducer (536 aa).

The Cytoplasmic portion of the chain corresponds to 1–10 (MFNRIRISTS). A helical membrane pass occupies residues 11–31 (LFLLLISFCIMQLISTGLSYV). The Periplasmic portion of the chain corresponds to 32 to 188 (ALRADNHNLE…ASSQQAYGWS (157 aa)). The segment at 64–73 (RNTLNRAGTR) is the 3 Arg may form a positively charged pocket, which binds the alpha-carboxyl group of the attractant AA. Residues 189 to 209 (IWLVAGAVLMLLVVTLSAMWW) traverse the membrane as a helical segment. Residues 210–536 (LRTMLVQPLN…VKETLDCQTA (327 aa)) lie on the Cytoplasmic side of the membrane. Residues 212–264 (TMLVQPLNIIRGHFERIASGDLSAPIEVYGRNEISQLFASLQRMQQSLIGTVG) enclose the HAMP domain. Residues 269 to 498 (GAESILIGLQ…ESASAAAALE (230 aa)) form the Methyl-accepting transducer domain. Gln-293 carries the post-translational modification Glutamate methyl ester (Gln). Glu-300 bears the Glutamate methyl ester (Glu) mark. Residue Gln-307 is modified to Glutamate methyl ester (Gln). Glu-489 and Glu-498 each carry glutamate methyl ester (Glu).

It belongs to the methyl-accepting chemotaxis (MCP) protein family.

It localises to the cell inner membrane. Its function is as follows. This protein responds to changes in Asp concentration in the environment, transduces a signal from the outside to the inside of the cell, and facilitates sensory adaptation through various levels of methylation. Functionally, chemotactic-signal transducers respond to changes in the concentration of attractants and repellents in the environment, transduce a signal from the outside to the inside of the cell, and facilitate sensory adaptation through the variation of the level of methylation. Attractants increase the level of methylation while repellents decrease the level of methylation, the methyl groups are added by the methyltransferase CheR and removed by the methylesterase CheB. This is Methyl-accepting chemotaxis aspartate transducer (tas) from Klebsiella aerogenes (strain ATCC 13048 / DSM 30053 / CCUG 1429 / JCM 1235 / KCTC 2190 / NBRC 13534 / NCIMB 10102 / NCTC 10006 / CDC 819-56) (Enterobacter aerogenes).